A 404-amino-acid polypeptide reads, in one-letter code: Cysteine desulfurase IscS (404 aa).

Pyridoxal 5'-phosphate-binding positions include 75–76, Asn155, Gln183, and 203–205; these read AT and SSH. Lys206 bears the N6-(pyridoxal phosphate)lysine mark. Residue Thr243 coordinates pyridoxal 5'-phosphate. Cys328 acts as the Cysteine persulfide intermediate in catalysis. Residue Cys328 participates in [2Fe-2S] cluster binding.

It belongs to the class-V pyridoxal-phosphate-dependent aminotransferase family. NifS/IscS subfamily. As to quaternary structure, homodimer. Forms a heterotetramer with IscU, interacts with other sulfur acceptors. Pyridoxal 5'-phosphate is required as a cofactor.

It localises to the cytoplasm. It catalyses the reaction (sulfur carrier)-H + L-cysteine = (sulfur carrier)-SH + L-alanine. It participates in cofactor biosynthesis; iron-sulfur cluster biosynthesis. Its function is as follows. Master enzyme that delivers sulfur to a number of partners involved in Fe-S cluster assembly, tRNA modification or cofactor biosynthesis. Catalyzes the removal of elemental sulfur atoms from cysteine to produce alanine. Functions as a sulfur delivery protein for Fe-S cluster synthesis onto IscU, an Fe-S scaffold assembly protein, as well as other S acceptor proteins. This chain is Cysteine desulfurase IscS, found in Pasteurella multocida (strain Pm70).